A 122-amino-acid polypeptide reads, in one-letter code: Fluoride-specific ion channel FluC (122 aa).

A run of 4 helical transmembrane segments spans residues methionine 1–leucine 21, phenylalanine 34–serine 54, glycine 60–phenylalanine 80, and phenylalanine 100–isoleucine 120.

The protein belongs to the fluoride channel Fluc/FEX (TC 1.A.43) family.

Its subcellular location is the cell inner membrane. The catalysed reaction is fluoride(in) = fluoride(out). In terms of biological role, fluoride-specific ion channel. Important for reducing fluoride concentration in the cell, thus reducing its toxicity. In Campylobacter lari (strain RM2100 / D67 / ATCC BAA-1060), this protein is Fluoride-specific ion channel FluC.